Reading from the N-terminus, the 242-residue chain is Small ribosomal subunit protein uS3 (242 aa).

Residues 39-110 enclose the KH type-2 domain; it reads IRKFIHKKYG…QVRINVVEVE (72 aa). A disordered region spans residues 216–242; sequence QTMPVGANPRRRASRRPQQFEDRSNEG. A compositionally biased stretch (basic and acidic residues) spans 233 to 242; sequence QQFEDRSNEG.

Belongs to the universal ribosomal protein uS3 family. As to quaternary structure, part of the 30S ribosomal subunit. Forms a tight complex with proteins S10 and S14.

Binds the lower part of the 30S subunit head. Binds mRNA in the 70S ribosome, positioning it for translation. This is Small ribosomal subunit protein uS3 from Synechococcus sp. (strain CC9902).